The following is a 39-amino-acid chain: Photosystem II reaction center protein L (39 aa).

The helical transmembrane segment at 18–38 (SLYLGLLLTFVMGILFSSYFF) threads the bilayer.

It belongs to the PsbL family. In terms of assembly, PSII is composed of 1 copy each of membrane proteins PsbA, PsbB, PsbC, PsbD, PsbE, PsbF, PsbH, PsbI, PsbJ, PsbK, PsbL, PsbM, PsbT, PsbX, PsbY, Psb30/Ycf12, peripheral proteins PsbO, CyanoQ (PsbQ), PsbU, PsbV and a large number of cofactors. It forms dimeric complexes.

The protein resides in the cellular thylakoid membrane. Functionally, one of the components of the core complex of photosystem II (PSII). PSII is a light-driven water:plastoquinone oxidoreductase that uses light energy to abstract electrons from H(2)O, generating O(2) and a proton gradient subsequently used for ATP formation. It consists of a core antenna complex that captures photons, and an electron transfer chain that converts photonic excitation into a charge separation. This subunit is found at the monomer-monomer interface and is required for correct PSII assembly and/or dimerization. The chain is Photosystem II reaction center protein L from Prochlorococcus marinus (strain MIT 9211).